The chain runs to 1512 residues: Mitogen-activated protein kinase kinase kinase 1 (1512 aa).

Residues 1–13 (MAAAAGNRASSSG) show a composition bias toward low complexity. Disordered regions lie at residues 1-37 (MAAAAGNRASSSGFPGARATSPEAGGGGGALKASSAP), 67-181 (SVEL…DRPE), and 213-304 (VKPI…PEET). Residue Ala2 is modified to N-acetylalanine. Phosphoserine occurs at positions 21 and 35. Composition is skewed to low complexity over residues 81-99 (AASPPASSTSPSPEPADAA), 129-142 (AAPDSGASSPAAAE), and 150-160 (AAEPSPAAAPA). Phosphoserine occurs at positions 137 and 154. Residues 162–181 (REMENKETLKGLHKMDDRPE) show a composition bias toward basic and acidic residues. A compositionally biased stretch (low complexity) spans 250 to 260 (SPSPGNSPSGR). Ser275 carries the phosphoserine modification. At Thr285 the chain carries Phosphothreonine. Phosphoserine is present on residues Ser292, Ser297, and Ser300. An SWIM-type zinc finger spans residues 338–366 (YRVFIGPQNCSCARGTFCIHLLFVMLRVF). Positions 416–433 (SNSHTLSSSSTSTSSSEN) are enriched in low complexity. Residues 416-436 (SNSHTLSSSSTSTSSSENSIK) form a disordered region. The segment at 443–492 (CPICLLGMLDEESLTVCEDGCRNKLHHHCMSIWAEECRRNREPLICPLCR) adopts an RING-type zinc-finger fold. Phosphoserine occurs at positions 507 and 531. Disordered stretches follow at residues 511–532 (SPSSLRAAQQQTVQQQPLAGSR) and 602–624 (STGNSGGSSGSSPSGGATSGSSQ). Residues 611–624 (GSSPSGGATSGSSQ) show a composition bias toward low complexity. Position 923 is a phosphoserine (Ser923). Residues 933 to 972 (SISVGPSSSTTTTTTTTEQPKPMVQTKGRPHSQCLNSSPL) are disordered. The segment covering 939–949 (SSSTTTTTTTT) has biased composition (low complexity). The residue at position 1018 (Ser1018) is a Phosphoserine. Positions 1032–1041 (NCPENKDSDK) are enriched in basic and acidic residues. Positions 1032-1087 (NCPENKDSDKLSPVFTQSRPLPSSNIHRPKPSRPTPGNTSKQGDPSKNSMTLDLNS) are disordered. A Phosphoserine modification is found at Ser1043. Composition is skewed to polar residues over residues 1045-1057 (VFTQSRPLPSSNI) and 1066-1087 (TPGNTSKQGDPSKNSMTLDLNS). Residues 1243–1508 (WLKGQQIGLG…SRELLKHPVF (266 aa)) enclose the Protein kinase domain. Residues 1249–1257 (IGLGAFSSC) and Lys1272 contribute to the ATP site. The active-site Proton acceptor is Asp1369. Residues Thr1400 and Thr1412 each carry the phosphothreonine; by autocatalysis modification.

This sequence belongs to the protein kinase superfamily. STE Ser/Thr protein kinase family. MAP kinase kinase kinase subfamily. As to quaternary structure, binds both upstream activators and downstream substrates in multimolecular complexes through its N-terminus. Oligomerizes after binding MAP2K4 or TRAF2. Interacts with AXIN1. Interacts (via the kinase catalytic domain) with STK38. Interacts with GRIPAP1. Mg(2+) is required as a cofactor. Autophosphorylated.

The catalysed reaction is L-seryl-[protein] + ATP = O-phospho-L-seryl-[protein] + ADP + H(+). It carries out the reaction L-threonyl-[protein] + ATP = O-phospho-L-threonyl-[protein] + ADP + H(+). The enzyme catalyses S-ubiquitinyl-[E2 ubiquitin-conjugating enzyme]-L-cysteine + [acceptor protein]-L-lysine = [E2 ubiquitin-conjugating enzyme]-L-cysteine + N(6)-ubiquitinyl-[acceptor protein]-L-lysine.. Activated by autophosphorylation on Thr-1400 and Thr-1412 following oligomerization. In terms of biological role, component of a protein kinase signal transduction cascade. Activates the ERK and JNK kinase pathways by phosphorylation of MAP2K1 and MAP2K4. May phosphorylate the MAPK8/JNK1 kinase. Activates CHUK and IKBKB, the central protein kinases of the NF-kappa-B pathway. The polypeptide is Mitogen-activated protein kinase kinase kinase 1 (MAP3K1) (Homo sapiens (Human)).